A 592-amino-acid polypeptide reads, in one-letter code: Colicin-A (592 aa).

Composition is skewed to gly residues over residues 1 to 13 (MPGF…GDGT) and 23 to 34 (PEPGGGSHGNSG). Disordered regions lie at residues 1-57 (MPGF…PGDS) and 373-395 (RQRQ…KAKD). A run of 2 helical transmembrane segments spans residues 528 to 548 (WVLS…TLGA) and 555 to 575 (VPAI…GALI).

This sequence belongs to the channel forming colicin family.

It localises to the cell membrane. Its function is as follows. This colicin is a channel-forming colicin. This class of transmembrane toxins depolarize the cytoplasmic membrane, leading to dissipation of cellular energy. Functionally, colicins are polypeptide toxins produced by and active against E.coli and closely related bacteria. This Citrobacter freundii protein is Colicin-A (caa).